Here is a 205-residue protein sequence, read N- to C-terminus: Thymidylate kinase (205 aa).

An ATP-binding site is contributed by 7 to 14 (GIDGSGKT).

Belongs to the thymidylate kinase family.

It carries out the reaction dTMP + ATP = dTDP + ADP. Its function is as follows. Phosphorylation of dTMP to form dTDP in both de novo and salvage pathways of dTTP synthesis. In Wolbachia pipientis subsp. Culex pipiens (strain wPip), this protein is Thymidylate kinase.